Reading from the N-terminus, the 107-residue chain is Iron-binding protein IscA (107 aa).

Residues C35, C99, and C101 each coordinate Fe cation.

This sequence belongs to the HesB/IscA family. Homodimer; may form tetramers and higher multimers. Requires Fe cation as cofactor.

Its function is as follows. Is able to transfer iron-sulfur clusters to apo-ferredoxin. Multiple cycles of [2Fe2S] cluster formation and transfer are observed, suggesting that IscA acts catalytically. Recruits intracellular free iron so as to provide iron for the assembly of transient iron-sulfur cluster in IscU in the presence of IscS, L-cysteine and the thioredoxin reductase system TrxA/TrxB. The sequence is that of Iron-binding protein IscA from Klebsiella pneumoniae (strain 342).